Reading from the N-terminus, the 132-residue chain is Small ribosomal subunit protein uS8 (132 aa).

The protein belongs to the universal ribosomal protein uS8 family. In terms of assembly, part of the 30S ribosomal subunit. Contacts proteins S5 and S12.

In terms of biological role, one of the primary rRNA binding proteins, it binds directly to 16S rRNA central domain where it helps coordinate assembly of the platform of the 30S subunit. This Corynebacterium efficiens (strain DSM 44549 / YS-314 / AJ 12310 / JCM 11189 / NBRC 100395) protein is Small ribosomal subunit protein uS8.